An 826-amino-acid chain; its full sequence is MWPQPHLPTHPHLPTHPHLPTHPHLPTHPMMSKETRQSKLAEAKEQLTDHHPQTNPSVGTAASDTKKKKINNGTNPETTTSGGCHSPEDEQKASHQHQEALRRELEAQVHTIRILTCQKTELQMALYYSQHAVKQLEGEARDLISRLHDSWKFAGELEQALSAVATQKKKADRYIEELTKERDALSLELYRNTITDEELKEKNAKLQEKLQLVESEKSEIQLNVKELKRKLERAKLLLPQQQLQAEADHLGKELQSVSAKLQAQVEENELWNRLNQQQEEKMWRQEEKIQEREEKIQEQEEKIREQEEKMRRQEEMMWEKEEKMRRQEEMMWEKEEKIRELEEKMHEQEKIREQEEKRQEEEKIREQEKRQEQEAKMWRQEEKIREQEEKIREQEKKMWRQEEKIHEQEKIREEEKRQEQEEMWRQEEKIREQEEIWRQKEKMHEQEEKIRKQEEKVWRQEEKMHDQEEKIREQEEKVWRQEEKIREQEEKMWRQEEKIREQEEMWREEEKMHEQEKIWEEEKRQEQEDKMWRQEEKIREQEEKVWRQEEKIREQEEKRQEQEEKMWKQEEKIREQEEKIREQEKIREQEEKIREQEEMMQEQEEKMGEQEEKMQEQEKMRRQEEKIREQEEKIREQKEKIREQEEKIWEQEEKIREQEEMMQEQEEKMGEQEEKMWEQEEEMQEQEEKMRRQEEKIREQEKKIREQEEKIREQEEMMQEQEEKMGEQEGKMCEQEAKMQEQEEKMRRQEEKIREQEKKIREQEEKIREQEEMMQEQEEKMWEQEEKMCEQEEKMQEQEEKMRRQEEKMREQEVRLRQQEEKMQEH.

Disordered regions lie at residues 1–100 (MWPQ…HQEA), 297–327 (QEQE…MRRQ), 345–425 (MHEQ…EMWR), 502–534 (QEEM…MWRQ), 547–646 (RQEE…EQEE), and 658–826 (QEEM…MQEH). The segment covering 31-52 (MSKETRQSKLAEAKEQLTDHHP) has biased composition (basic and acidic residues). 2 stretches are compositionally biased toward polar residues: residues 53 to 63 (QTNPSVGTAAS) and 71 to 83 (NNGT…TSGG). The segment covering 86–100 (SPEDEQKASHQHQEA) has biased composition (basic and acidic residues). Residues 157–822 (LEQALSAVAT…EVRLRQQEEK (666 aa)) adopt a coiled-coil conformation. Composition is skewed to basic and acidic residues over residues 658–678 (QEEM…KMWE) and 686–826 (QEEK…MQEH).

It belongs to the GOLGA6 family.

The sequence is that of Golgin subfamily A member 6-like protein 25 from Homo sapiens (Human).